The primary structure comprises 275 residues: Shikimate dehydrogenase (NADP(+)) (275 aa).

Shikimate is bound by residues 17–19 (SKS) and Thr64. The active-site Proton acceptor is Lys68. Glu80 contacts NADP(+). Positions 89 and 105 each coordinate shikimate. Residues 129-133 (GAGGA), 152-157 (NRTFFK), and Met216 each bind NADP(+). A shikimate-binding site is contributed by Tyr218. Gly240 contributes to the NADP(+) binding site.

It belongs to the shikimate dehydrogenase family. In terms of assembly, homodimer.

The enzyme catalyses shikimate + NADP(+) = 3-dehydroshikimate + NADPH + H(+). The protein operates within metabolic intermediate biosynthesis; chorismate biosynthesis; chorismate from D-erythrose 4-phosphate and phosphoenolpyruvate: step 4/7. Functionally, involved in the biosynthesis of the chorismate, which leads to the biosynthesis of aromatic amino acids. Catalyzes the reversible NADPH linked reduction of 3-dehydroshikimate (DHSA) to yield shikimate (SA). The protein is Shikimate dehydrogenase (NADP(+)) of Pectobacterium atrosepticum (strain SCRI 1043 / ATCC BAA-672) (Erwinia carotovora subsp. atroseptica).